We begin with the raw amino-acid sequence, 540 residues long: Mitochondrial antiviral-signaling protein (540 aa).

P2 is subject to N-acetylproline. The Cytoplasmic portion of the chain corresponds to 2 to 513; it reads PFAEDKTYKY…REVPCHRPSP (512 aa). Residues K7 and K10 each participate in a glycyl lysine isopeptide (Lys-Gly) (interchain with G-Cter in ubiquitin) cross-link. Positions 10–77 constitute a CARD domain; sequence KYICRNFSNF…WVEYFIAALR (68 aa). Residues 10–77 form a required for interaction with NLRX1 region; that stretch reads KYICRNFSNF…WVEYFIAALR (68 aa). The S-palmitoyl cysteine moiety is linked to residue C79. The segment at 95–297 is disordered; sequence YQPRTSDRPP…EAPANSLPSK (203 aa). Over residues 106-122 the composition is skewed to pro residues; sequence PLEPPSLPAERPGPPTP. The interaction with TRAF2 stretch occupies residues 143 to 147; sequence PVQET. Composition is skewed to polar residues over residues 145–165 and 179–216; these read QETQAPESPGENSEQALQTLS and ESSSDLAALSPLTSSGHQEQDTELGSTHTAGATSSLTP. Phosphoserine is present on residues S152, S157, S165, S180, and S188. The interval 153–158 is interaction with TRAF6; the sequence is PGENSE. Phosphothreonine is present on T215. S222 and S233 each carry phosphoserine. The residue at position 234 (T234) is a Phosphothreonine. R236 carries the post-translational modification Asymmetric dimethylarginine. The segment covering 241–266 has biased composition (low complexity); sequence PGPTGSVVSTGTSFSSSSPGLASAGA. Residues S253 and S258 each carry the phosphoserine modification. Residues K311 and K325 each participate in a glycyl lysine isopeptide (Lys-Gly) (interchain with G-Cter in ubiquitin) cross-link. Disordered regions lie at residues 314–358 and 373–419; these read ANPA…RAGM and SAST…SELS. Polar residues-rich tracts occupy residues 317–331, 339–355, and 373–382; these read ASVSTVPSKLPTSSK, NALTNPAPSKLPINSTR, and SASTVPTDGS. Residues 388-403 are compositionally biased toward low complexity; that stretch reads TPAAPTPAGATGGSSA. Position 408 is a phosphoserine (S408). Positions 439–442 match the pLxIS motif motif; sequence LAIS. Phosphoserine; by TBK1 is present on S442. Positions 455–460 are interaction with TRAF6; that stretch reads PEENEY. Residues K461 and K500 each participate in a glycyl lysine isopeptide (Lys-Gly) (interchain with G-Cter in ubiquitin) cross-link. K461 participates in a covalent cross-link: (Microbial infection) Glycyl lysine isopeptide (Lys-Gly) (interchain with G-Cter in UFM1). The segment at 476 to 507 is disordered; it reads IQLLEGNPGPPADPDGGPRPQADRKFQEREVP. Residues 496–507 show a composition bias toward basic and acidic residues; sequence QADRKFQEREVP. Residues 514-534 traverse the membrane as a helical segment; sequence GALWLQVAVTGVLVVTLLVVL. The Mitochondrial intermembrane portion of the chain corresponds to 535-540; that stretch reads YRRRLH.

As to quaternary structure, self-associates and polymerizes (via CARD domains) to form 400 nM long three-stranded helical filaments on mitochondria, filament nucleation requires interaction with RIGI whose CARD domains act as a template for filament assembly. Interacts with RIGI, IFIH1/MDA5, TRAF2, TRAF6 and C1QBP. May interact with FADD, RIPK1, CHUK and IKBKB. Interacts (when phosphorylated) with IRF3; following activation and phosphorylation on the pLxIS motif by TBK1, recruits IRF3. Interacts with NLRX1. Interaction with NLRX1 requires the CARD domain. Interacts with PSMA7. Interacts with TRAFD1. Interacts (via C-terminus) with PCBP2 in a complex containing MAVS/IPS1, PCBP2 and ITCH. Interacts with CYLD. Interacts with SRC. Interacts with DHX58/LGP2 and IKBKE. Interacts with STING1. Interacts with IFIT3 (via N-terminus). Interacts with TBK1 only in the presence of IFIT3. Interacts with TTLL12; the interaction prevents MAVS binding to TBK1 and IKBKE. Interacts with MUL1. Interacts with ANKRD17. Interacts with NDFIP1. Interacts with SMURF1; the interaction is mediated by NDFIP1 and leads to MAVS ubiquitination and degradation. Interacts with UBXN1; this interaction inhibits MAVS-mediated antiviral pathway. Interacts (via C-terminus) with GPATCH3; the interaction is markedly increased upon viral infection. Directly interacts (via CARD domain) with ATG5 and ATG12, either as ATG5 and ATG12 monomers or as ATG12-ATG5 conjugates. Interacts with DHX33 (via the helicase C-terminal domain). Interacts with DDX3X (via C-terminus); this interaction occurs rapidly, but transiently after Sendai virus infection. The interaction with DDX3X potentiates MAVS-mediated IFNB induction. Conversely inhibition of this interaction, for instance by HCV core protein, prevents MAVS-mediated IFNB induction. Transiently interacts with TRAF3 early during Sendai virus infection. Interacts with CLPB; the interaction is enhanced by Sendai virus infection. Interacts with TRAF3IP3. Interacts with TOMM70; the interaction is enhanced by Sendai virus infection. Interacts with ZNFX1. Interacts with N4BP3; this interaction promotes the polyubiquitination of MAVS. Interacts with TAX1BP1; this interaction induces MAVS polyubiquitination. Interacts with NLRP3; promoting NLRP3 recruitment to mitochondria and activation of the NLRP3 inflammasome. Interacts with ECSIT; this interaction bridges RIGI to the MAVS complex at the mitochondrion. Interacts with UBL7; this interaction promotes MAVS 'Lys-27'-linked ubiquitination leading to type I interferon production. Interacts (via transmembrane domain) with SMIM30/MAVI1 (via transmembrane domain); the interaction disrupts MAVS interaction with RIGI and inhibits MAVS aggregation, resulting in the repression of type I interferon signaling and innate immune responses. (Microbial infection) Interacts with hepatitis C virus (HCV) NS3/4A protease; this interaction leads to MAVS cleavage, thereby preventing the establishment of an antiviral state. In terms of assembly, (Microbial infection) Interacts with hepatitis GB virus B NS3/4A protease; this interaction leads to MAVS cleavage. As to quaternary structure, (Microbial infection) Interacts with human respiratory syncytial virus/HRSV protein NS1; this interaction disrupts MAVS binding to RIGI. (Microbial infection) Interacts with Andes virus Nnon-structural protein NS-S; this interaction may reduce MAVS ubiquitination and leads to inhibition of MAVS-induced type-I IFN signaling pathway. In terms of assembly, (Microbial infection) Interacts with Seneca Valley virus protease 3C; this interaction allows the cleavage of MAVS and subsequent suppression of host innate immunity. As to quaternary structure, (Microbial infection) Interacts with SARS-CoV virus protein ORF9b; this interaction mediates MAVS proteasomal degradation. (Microbial infection) Interacts with SARS-CoV-2 virus protein M; this interaction impairs MAVS self-association and its recruitment of downstream components. In terms of assembly, (Microbial infection) Interacts with foot-and-mouth disease virus protein VP1; this interaction competes with TRAF3 interaction to MAVS leading to suppression of host innate immunity. As to quaternary structure, (Microbial infection) Interacts with Epstein-Barr virus protein BILF1; this interaction mediates MAVS routing from mitochondria to lysosomes. Post-translationally, following activation, phosphorylated by TBK1 at Ser-442 in the pLxIS motif. The phosphorylated pLxIS motif constitutes an IRF3-binding motif, leading to recruitment of the transcription factor IRF3 to induce type-I interferons and other cytokines. Ubiquitinated. Undergoes 'Lys-48'-linked polyubiquitination catalyzed by ITCH; ITCH-dependent polyubiquitination is mediated by the interaction with PCBP2 and leads to MAVS/IPS1 proteasomal degradation. Ubiquitinated by RNF125, leading to its degradation by the proteasome. Undergoes 'Lys-48'-linked ubiquitination catalyzed by SMURF1. Undergoes 'Lys-48'-linked ubiquitination catalyzed by MARCHF5 at Lys-7 and Lys-500, leading to proteasomal degradation. Ubiquitinated via 'Lys-63'-linked ubiquitination at Lys-10, Lys-311 and Lys-461 by UBE2N and TRIM31, promoting MAVS polymerization and formation of three-stranded helical filaments on mitochondria. Undergoes 'Lys-63'-linked ubiquitination leading to enhanced interaction between MAVS and TRAF2. Undergoes 'Lys-27'-linked ubiquitination by TRIM21 leading to enhanced interaction between MAVS and TBK1. Deubiquitinated by USP10 leading to attenuation of RIGI-mediated MAVS aggregation and production of type I interferon. Undergoes 'Lys-48'-linked polyubiquitination catalyzed by RNF115 leading to its degradation. In terms of processing, palmitoylated by ZHDDC4. Palmitoylation promotes MAVS stabilization and activation by inhibiting 'Lys-48'- but facilitating 'Lys-63'-linked ubiquitination. Post-translationally, proteolytically cleaved by apoptotic caspases during apoptosis, leading to its inactivation. Cleavage by CASP3 during virus-induced apoptosis inactivates it, preventing cytokine overproduction. (Microbial infection) Cleaved and degraded by hepatitis A virus (HAV) protein 3ABC allowing the virus to disrupt the activation of host IRF3 through the MDA5 pathway. In terms of processing, (Microbial infection) Cleaved by the protease 2A of coxsackievirus B3, poliovirus and enterovirus 71 allowing the virus to disrupt the host type I interferon production. Post-translationally, (Microbial infection) Cleaved by Seneca Valley virus protease 3C allowing the virus to suppress interferon type-I production. (Microbial infection) Cleaved by HCV protease NS3/4A, thereby preventing the establishment of an antiviral state. In terms of processing, (Microbial infection) UFMylated by ULF1 in association with Epstein-Barr virus BILF1; leading to MAVS routing to the lysosome. Present in T-cells, monocytes, epithelial cells and hepatocytes (at protein level). Ubiquitously expressed, with highest levels in heart, skeletal muscle, liver, placenta and peripheral blood leukocytes.

It localises to the mitochondrion outer membrane. It is found in the mitochondrion. The protein resides in the peroxisome. Its function is as follows. Adapter required for innate immune defense against viruses. Acts downstream of DHX33, RIGI and IFIH1/MDA5, which detect intracellular dsRNA produced during viral replication, to coordinate pathways leading to the activation of NF-kappa-B, IRF3 and IRF7, and to the subsequent induction of antiviral cytokines such as IFNB and RANTES (CCL5). Peroxisomal and mitochondrial MAVS act sequentially to create an antiviral cellular state. Upon viral infection, peroxisomal MAVS induces the rapid interferon-independent expression of defense factors that provide short-term protection, whereas mitochondrial MAVS activates an interferon-dependent signaling pathway with delayed kinetics, which amplifies and stabilizes the antiviral response. May activate the same pathways following detection of extracellular dsRNA by TLR3. May protect cells from apoptosis. Involved in NLRP3 inflammasome activation by mediating NLRP3 recruitment to mitochondria. In Homo sapiens (Human), this protein is Mitochondrial antiviral-signaling protein.